A 596-amino-acid polypeptide reads, in one-letter code: Chaperone protein DnaK (596 aa).

T174 carries the post-translational modification Phosphothreonine; by autocatalysis. Positions 576–596 (ANATKDQSSKDQEEVATVVEE) are disordered.

Belongs to the heat shock protein 70 family.

In terms of biological role, acts as a chaperone. The sequence is that of Chaperone protein DnaK from Mycoplasmopsis synoviae (strain 53) (Mycoplasma synoviae).